The chain runs to 254 residues: tRNA uridine(34) hydroxylase (254 aa).

Residues 123-217 form the Rhodanese domain; it reads QDPNVILLDT…YLESIPESES (95 aa). Catalysis depends on C177, which acts as the Cysteine persulfide intermediate.

The protein belongs to the TrhO family.

It catalyses the reaction uridine(34) in tRNA + AH2 + O2 = 5-hydroxyuridine(34) in tRNA + A + H2O. Its function is as follows. Catalyzes oxygen-dependent 5-hydroxyuridine (ho5U) modification at position 34 in tRNAs. This is tRNA uridine(34) hydroxylase from Legionella pneumophila (strain Paris).